Consider the following 75-residue polypeptide: Cytochrome c oxidase assembly factor 5 (75 aa).

A CHCH domain is found at 28 to 66 (QSDCVLQEGKSPKECLKEGYCKALQVTFFECKRSILDNR). Residues 31–42 (CVLQEGKSPKEC) carry the Cx10C motif motif. 2 disulfides stabilise this stretch: C31-C58 and C42-C48. A Cx9C motif motif is present at residues 48-58 (CKALQVTFFEC).

It belongs to the PET191 family.

Involved in an early step of the mitochondrial complex IV assembly process. This is Cytochrome c oxidase assembly factor 5 (coa5) from Xenopus laevis (African clawed frog).